An 808-amino-acid chain; its full sequence is Enhancer of polycomb homolog 2 (808 aa).

Residues K135, K195, and K324 each participate in a glycyl lysine isopeptide (Lys-Gly) (interchain with G-Cter in SUMO2) cross-link. The segment at 337–357 (YPKKPKAEAGIAPQQPTPETL) is disordered. K362 is covalently cross-linked (Glycyl lysine isopeptide (Lys-Gly) (interchain with G-Cter in SUMO2)). 3 disordered regions span residues 371-397 (QSSD…PDGS), 595-630 (QRQQ…CMSK), and 645-682 (VSAP…LYST). Positions 595-614 (QRQQLAQLHQKQQSQHSSQQ) are enriched in low complexity. 2 stretches are compositionally biased toward polar residues: residues 615 to 630 (THPK…CMSK) and 658 to 682 (EQNT…LYST). S755 bears the Phosphoserine mark.

The protein belongs to the enhancer of polycomb family.

The protein resides in the nucleus. May play a role in transcription or DNA repair. The polypeptide is Enhancer of polycomb homolog 2 (Epc2) (Mus musculus (Mouse)).